Here is a 501-residue protein sequence, read N- to C-terminus: Glycerol kinase (501 aa).

ADP is bound at residue threonine 16. Positions 16, 17, and 18 each coordinate ATP. Threonine 16 contributes to the sn-glycerol 3-phosphate binding site. Arginine 20 is a binding site for ADP. Sn-glycerol 3-phosphate is bound by residues arginine 84, glutamate 85, tyrosine 135, and aspartate 242. 5 residues coordinate glycerol: arginine 84, glutamate 85, tyrosine 135, aspartate 242, and glutamine 243. ADP-binding residues include threonine 264 and glycine 307. Positions 264, 307, 311, and 408 each coordinate ATP. Glycine 408 is a binding site for ADP.

Belongs to the FGGY kinase family.

It carries out the reaction glycerol + ATP = sn-glycerol 3-phosphate + ADP + H(+). The protein operates within polyol metabolism; glycerol degradation via glycerol kinase pathway; sn-glycerol 3-phosphate from glycerol: step 1/1. Key enzyme in the regulation of glycerol uptake and metabolism. Catalyzes the phosphorylation of glycerol to yield sn-glycerol 3-phosphate. The polypeptide is Glycerol kinase (Saccharolobus islandicus (strain L.S.2.15 / Lassen #1) (Sulfolobus islandicus)).